The chain runs to 307 residues: Ribosomal RNA small subunit methyltransferase H (307 aa).

S-adenosyl-L-methionine contacts are provided by residues 32 to 34 (GGH), Asp52, Phe78, Asp99, and Gln106. Positions 287–307 (KEEIESNKRSHSAKLRVAEKV) are disordered.

This sequence belongs to the methyltransferase superfamily. RsmH family.

The protein localises to the cytoplasm. The enzyme catalyses cytidine(1402) in 16S rRNA + S-adenosyl-L-methionine = N(4)-methylcytidine(1402) in 16S rRNA + S-adenosyl-L-homocysteine + H(+). Functionally, specifically methylates the N4 position of cytidine in position 1402 (C1402) of 16S rRNA. The protein is Ribosomal RNA small subunit methyltransferase H of Caldicellulosiruptor bescii (strain ATCC BAA-1888 / DSM 6725 / KCTC 15123 / Z-1320) (Anaerocellum thermophilum).